A 93-amino-acid chain; its full sequence is Alpha-defensin 22 (93 aa).

The signal sequence occupies residues 1–19 (MKKLVLLSALVLLAYQVQT). A propeptide spanning residues 20–58 (DPIQNTDEETNTEEQPGEEDQAVSVSFGGQEGSALHEKL) is cleaved from the precursor. A disordered region spans residues 22–41 (IQNTDEETNTEEQPGEEDQA). The segment covering 25-40 (TDEETNTEEQPGEEDQ) has biased composition (acidic residues). Cystine bridges form between Cys-64–Cys-89, Cys-66–Cys-81, and Cys-71–Cys-88.

This sequence belongs to the alpha-defensin family.

The protein localises to the secreted. Functionally, may have microbicidal activities. This chain is Alpha-defensin 22 (Defa22), found in Mus musculus (Mouse).